Consider the following 258-residue polypeptide: Phosphoribosylaminoimidazole-succinocarboxamide synthase (258 aa).

Belongs to the SAICAR synthetase family.

It catalyses the reaction 5-amino-1-(5-phospho-D-ribosyl)imidazole-4-carboxylate + L-aspartate + ATP = (2S)-2-[5-amino-1-(5-phospho-beta-D-ribosyl)imidazole-4-carboxamido]succinate + ADP + phosphate + 2 H(+). It participates in purine metabolism; IMP biosynthesis via de novo pathway; 5-amino-1-(5-phospho-D-ribosyl)imidazole-4-carboxamide from 5-amino-1-(5-phospho-D-ribosyl)imidazole-4-carboxylate: step 1/2. The polypeptide is Phosphoribosylaminoimidazole-succinocarboxamide synthase (Maricaulis maris (strain MCS10) (Caulobacter maris)).